A 150-amino-acid polypeptide reads, in one-letter code: MLDNPLAVRRAAMDLLARREHGRVELTRKLRKRGAPDELIDGALDRLAEEGLLSEARYLESFVAYRARAGYGPQRIREELGQRGLARGDIDQALRDSGIDWFEQLRETWQRKYAGRLPNDARERAQQGRFLAYRGYSLDMIGRLLRGCDE.

It belongs to the RecX family.

It localises to the cytoplasm. Its function is as follows. Modulates RecA activity. In Ectopseudomonas mendocina (strain ymp) (Pseudomonas mendocina), this protein is Regulatory protein RecX.